We begin with the raw amino-acid sequence, 506 residues long: NAD(P)H-quinone oxidoreductase chain 4, chloroplastic (506 aa).

14 consecutive transmembrane segments (helical) span residues 5–25 (FPLL…IPFL), 35–55 (WYTL…FIYK), 88–108 (MPLI…AWPI), 114–134 (LFYF…LSQD), 135–155 (ILLF…LLSL), 168–188 (FILY…TMAF), 209–229 (ALEI…LPAF), 243–263 (HYST…YGLI), 275–295 (VIFS…GALT), 309–329 (SSIS…DLGL), 331–351 (GAMM…FLAG), 386–406 (SLAL…LGFL), 415–435 (FIAL…IYLL), and 463–483 (IFIM…PNLT).

This sequence belongs to the complex I subunit 4 family.

The protein localises to the plastid. The protein resides in the chloroplast thylakoid membrane. It carries out the reaction a plastoquinone + NADH + (n+1) H(+)(in) = a plastoquinol + NAD(+) + n H(+)(out). The catalysed reaction is a plastoquinone + NADPH + (n+1) H(+)(in) = a plastoquinol + NADP(+) + n H(+)(out). The sequence is that of NAD(P)H-quinone oxidoreductase chain 4, chloroplastic from Chaetosphaeridium globosum (Charophycean green alga).